Consider the following 353-residue polypeptide: uncharacterized protein (353 aa).

An N-terminal signal peptide occupies residues 1–18; that stretch reads MKFVLFAQLAAVAAPAIA. The tract at residues 94–119 is disordered; that stretch reads EGGNVRRVPGGPSQSARQIGDSSTPM. The span at 105–119 shows a compositional bias: polar residues; it reads PSQSARQIGDSSTPM. N-linked (GlcNAc...) asparagine glycosylation is found at asparagine 165 and asparagine 312.

The protein belongs to the glycosyl hydrolase 3 family.

Its subcellular location is the secreted. This is an uncharacterized protein from Arthroderma benhamiae (strain ATCC MYA-4681 / CBS 112371) (Trichophyton mentagrophytes).